Reading from the N-terminus, the 142-residue chain is Large ribosomal subunit protein uL11 (142 aa).

This sequence belongs to the universal ribosomal protein uL11 family. Part of the ribosomal stalk of the 50S ribosomal subunit. Interacts with L10 and the large rRNA to form the base of the stalk. L10 forms an elongated spine to which L12 dimers bind in a sequential fashion forming a multimeric L10(L12)X complex. One or more lysine residues are methylated.

Forms part of the ribosomal stalk which helps the ribosome interact with GTP-bound translation factors. The sequence is that of Large ribosomal subunit protein uL11 from Edwardsiella ictaluri (strain 93-146).